The chain runs to 762 residues: Anhydrosialidase (762 aa).

Positions 1 to 27 (MGRIGKKAMAIALVSAVMVTPLNVCAT) are cleaved as a signal peptide. Substrate is bound at residue R293. D318 acts as the Proton acceptor in catalysis. BNR repeat units follow at residues 328–339 (AKSTDGGNTWSE), 511–522 (RYSDDEGASWSD), and 571–582 (MYSDDHGDNWTY). The active site involves E595. R611 contributes to the substrate binding site. A BNR 4 repeat occupies 620-631 (VTSIDGGETWSD). A substrate-binding site is contributed by R673. The active-site Nucleophile is the Y713.

This sequence belongs to the glycosyl hydrolase 33 family.

The protein localises to the secreted. It localises to the extracellular space. It catalyses the reaction Elimination of alpha-sialyl groups in N-acetylneuraminic acid glycosides, releasing 2,7-anhydro-alpha-N-acetylneuraminate.. In Macrobdella decora (North American leech), this protein is Anhydrosialidase.